The chain runs to 263 residues: uncharacterized protein (263 aa).

An N-terminal signal peptide occupies residues 1–22; sequence MEYLKRLALFISVIILTIFIMG. The N-palmitoyl cysteine moiety is linked to residue C23. Residue C23 is the site of S-diacylglycerol cysteine attachment.

It belongs to the staphylococcal tandem lipoprotein family.

It localises to the cell membrane. This is an uncharacterized protein from Staphylococcus aureus (strain MSSA476).